Consider the following 1203-residue polypeptide: Exonuclease/helicase subunit RexA (1203 aa).

The region spanning 4-472 (VKLTPEQNEA…IRLKENFRSR (469 aa)) is the UvrD-like helicase ATP-binding domain. 25-32 (ASAGSGKT) contributes to the ATP binding site. Residues 503 to 785 (VQGNISDYPV…RVMTFHKSKG (283 aa)) form the UvrD-like helicase C-terminal domain.

It belongs to the helicase family. AddA subfamily. Heterodimer of RexA (AddA) and RexB. Mg(2+) serves as cofactor.

The catalysed reaction is Couples ATP hydrolysis with the unwinding of duplex DNA by translocating in the 3'-5' direction.. It catalyses the reaction ATP + H2O = ADP + phosphate + H(+). The heterodimer acts both as an ATP-dependent DNA helicase and an ATP-dependent, dual-direction single-stranded exonuclease. Recognizes the L.lactis chi site (5'-GCGCGTG-3'), which stimulates homologous recombination. The RexA (AddA) nuclease domain is required for chi fragment generation; this subunit has 3'-&gt;5' exonuclease activity and probably also performs the helicase function. The polypeptide is Exonuclease/helicase subunit RexA (Lactococcus lactis subsp. cremoris (strain MG1363)).